The following is a 152-amino-acid chain: Interleukin-1 family member 10 (152 aa).

It belongs to the IL-1 family. As to quaternary structure, interacts with cargo receptor TMED10; the interaction mediates the translocation from the cytoplasm into the ERGIC (endoplasmic reticulum-Golgi intermediate compartment) and thereby secretion. As to expression, expressed in fetal skin, spleen and tonsil. Expressed mostly in the basal epithelia of skin and in proliferating B-cells of the tonsil.

It is found in the cytoplasm. Its subcellular location is the secreted. In terms of biological role, cytokine with immunomodulatory activity. Alone, does not induce cytokine production, but reduces IL22 and IL17A production by T-cells in response to heat-killed Candida albicans. Reduces IL36G-induced production of IL8 by peripheral blood mononuclear cells. Increases IL6 production by dendritic cells stimulated by bacterial lipopolysaccharides (LPS). Ligand for IL-36R/IL1RL2. This chain is Interleukin-1 family member 10, found in Homo sapiens (Human).